Consider the following 797-residue polypeptide: Kinesin-like protein Klp68D (797 aa).

Residues 19 to 344 (CVQVVVRCRP…LRYASRAKSI (326 aa)) enclose the Kinesin motor domain. ATP is bound at residue 106–113 (GQTGTGKT). The stretch at 350–384 (KNEDPQDAKLKEYQEEIERLKRLIAPQQQQRSEKQ) forms a coiled coil. Disordered stretches follow at residues 371–450 (RLIA…ELER), 610–656 (SSFP…PSSL), and 722–797 (ANSS…LVNK). Positions 386-396 (TIKKQRVKKPK) are enriched in basic residues. Acidic residues predominate over residues 417–431 (QVDEDRDSDGDGAES). The span at 432–450 (ESDKENEAEVAKSNEELER) shows a compositional bias: basic and acidic residues. Positions 432 to 580 (ESDKENEAEV…LVKELKRQLL (149 aa)) form a coiled coil. The span at 626–638 (GYRRPVSHPQRRR) shows a compositional bias: basic residues. A compositionally biased stretch (low complexity) spans 782–791 (KKPASAYPKA).

This sequence belongs to the TRAFAC class myosin-kinesin ATPase superfamily. Kinesin family. Kinesin II subfamily.

It localises to the cytoplasm. The protein resides in the cytoskeleton. Plus-end directed microtubule motor that may be used for anterograde axonal transport and could conceivably move cargos in fly neurons different than those moved by kinesin heavy chain or other plus-end directed motors. In Drosophila pseudoobscura pseudoobscura (Fruit fly), this protein is Kinesin-like protein Klp68D.